We begin with the raw amino-acid sequence, 262 residues long: MKPLIQVQGVSQRFSTASGEFLALQNVSFDIYEGETISLIGHSGCGKSTLLNLIAGIALPTEGGLLCDNREIAGPGPERAVVFQNHSLLPWLTCFDNVALAVDQVFRRSMSKGERKEWIEHNLERVQMGHALHKRPGEISGGMKQRVGIARALAMKPKVLLLDEPFGALDALTRAHLQDAVMQIQQSLNTTIVMITHDVDEAVLLSDRVLMMTNGPAATVGEILDVNLPRPRNRVQLADDSRYHHLRQQILHFLYEKQPKAA.

Residues isoleucine 5 to aspartate 239 form the ABC transporter domain. Glycine 41 to serine 48 is an ATP binding site.

It belongs to the ABC transporter superfamily.

The protein localises to the cell membrane. Probably part of a high-affinity binding-protein-dependent transport system for nitrate. Probably responsible for energy coupling to the transport system. This chain is Nitrate transport protein NasD (nasD), found in Klebsiella oxytoca.